Reading from the N-terminus, the 209-residue chain is ATP-dependent Clp protease proteolytic subunit 2 (209 aa).

S107 (nucleophile) is an active-site residue. The active site involves H132.

The protein belongs to the peptidase S14 family. As to quaternary structure, fourteen ClpP subunits assemble into 2 heptameric rings which stack back to back to give a disk-like structure with a central cavity, resembling the structure of eukaryotic proteasomes.

The protein resides in the cytoplasm. The enzyme catalyses Hydrolysis of proteins to small peptides in the presence of ATP and magnesium. alpha-casein is the usual test substrate. In the absence of ATP, only oligopeptides shorter than five residues are hydrolyzed (such as succinyl-Leu-Tyr-|-NHMec, and Leu-Tyr-Leu-|-Tyr-Trp, in which cleavage of the -Tyr-|-Leu- and -Tyr-|-Trp bonds also occurs).. Functionally, cleaves peptides in various proteins in a process that requires ATP hydrolysis. Has a chymotrypsin-like activity. Plays a major role in the degradation of misfolded proteins. This is ATP-dependent Clp protease proteolytic subunit 2 from Corynebacterium jeikeium (strain K411).